The chain runs to 485 residues: MANLATGEKLKNFIGGQWVESDSGKTEAVPNPATGEILAHVPISNREDLDRAVSVAKEAFKTWGKTPVPRRARVLFKYQQLLVENWEELARLVTLENGKSYKEAYGEVQRGIECVEFAAGAPSLMMGKQLPDIATNIESGMYRYPIGVVGGITPFNFPMMVPCWMFPLAIACGNTFVLKPSERTPLLANRLAELFTEAGLPEGVLNIVHGAHDVVNGLLEHPDVKAISFVGSQPVAEYVYKTASQHGKRVQALAGAKNHSIVMPDADLDGAVNQIVNAAYGSAGERCMAAAVVVAVGEVAEPLMEKLQKAVNEITIGNGLDDDVFLGPVIRESHKQKTENYIELGEKEGATLVRDGRKDNVSKDGYFLGPTLFDNVTTEMTIWKEEIFAPVLSVVRVESLDEAIQLTNQSEFANGACLYTTNGSSVRKFREEIDAGMLGINLGVPAPMAFFPFSGWKNSFYGDLHANGTDGVEFYTRKKMITARW.

Phe-155, Lys-179, Glu-182, Arg-183, and Ser-232 together coordinate NAD(+). The active-site Nucleophile is the Cys-287. Glu-386 contacts NAD(+).

It belongs to the aldehyde dehydrogenase family. IolA subfamily. Homotetramer.

The catalysed reaction is 3-oxopropanoate + NAD(+) + CoA + H2O = hydrogencarbonate + acetyl-CoA + NADH + H(+). The enzyme catalyses 2-methyl-3-oxopropanoate + NAD(+) + CoA + H2O = propanoyl-CoA + hydrogencarbonate + NADH + H(+). Its pathway is polyol metabolism; myo-inositol degradation into acetyl-CoA; acetyl-CoA from myo-inositol: step 7/7. Functionally, catalyzes the oxidation of malonate semialdehyde (MSA) and methylmalonate semialdehyde (MMSA) into acetyl-CoA and propanoyl-CoA, respectively. Is involved in a myo-inositol catabolic pathway. Bicarbonate, and not CO2, is the end-product of the enzymatic reaction. In Halalkalibacterium halodurans (strain ATCC BAA-125 / DSM 18197 / FERM 7344 / JCM 9153 / C-125) (Bacillus halodurans), this protein is Malonate-semialdehyde dehydrogenase.